The chain runs to 1299 residues: Protein prickle (1299 aa).

A compositionally biased stretch (gly residues) spans 1–19 (MSSLSTGGGAGGSSGGPGG). 5 disordered regions span residues 1 to 24 (MSSL…DAAA), 115 to 181 (ADDG…EVTQ), 241 to 289 (EEES…PQVP), 368 to 396 (LPRH…PSSS), and 425 to 527 (LPPH…DDDS). The span at 145 to 159 (SPRRSKKLLRSLRAH) shows a compositional bias: basic residues. The segment covering 168–181 (NDTTTANESSEVTQ) has biased composition (polar residues). The span at 263 to 272 (PVPPLPPPPA) shows a compositional bias: pro residues. Over residues 425 to 434 (LPPHHQQHPG) the composition is skewed to low complexity. Residues 435-445 (AGMGPGPGSGA) show a composition bias toward gly residues. The span at 457-469 (PGCSANPKYSNAQ) shows a compositional bias: polar residues. The 109-residue stretch at 515–623 (MDMQRQSHSD…NVRQLMSARP (109 aa)) folds into the PET domain. Basic and acidic residues predominate over residues 516–525 (DMQRQSHSDD). 3 LIM zinc-binding domains span residues 622–686 (RPCD…ETLK), 687–747 (PRCS…MFAE), and 748–810 (YCDY…GEPP). 3 disordered regions span residues 807-865 (GEPP…HQAT), 902-940 (KDLE…GDFQ), and 1026-1249 (ADIL…SSSS). Residues 844 to 864 (PSSHASSSPPMSPQQQQQHQA) are compositionally biased toward low complexity. Composition is skewed to polar residues over residues 922 to 934 (RASS…SPLN) and 1070 to 1081 (SLNTPMSTQSAS). The span at 1089 to 1101 (SILSGASSSSPMS) shows a compositional bias: low complexity. Over residues 1136-1150 (GERERDRDKDKEGGG) the composition is skewed to basic and acidic residues. A compositionally biased stretch (basic residues) spans 1151 to 1183 (RHGHGHSSRRRRRRKSSSSSSHHRSGSGHRSHS). The segment covering 1216–1231 (SPSRQQRERERERERE) has biased composition (basic and acidic residues). Residues 1238–1249 (VCSTCSSSSSSS) show a composition bias toward low complexity.

This sequence belongs to the prickle / espinas / testin family. Interacts with dsh; PET and LIM domains interact with dsh DEP domain, in wing cells. Interacts with Vang in photoreceptor cells. Expressed in the wing, leg and eye imaginal disks. Expressed within the photoreceptors of the eye.

The protein localises to the cell membrane. Its function is as follows. Acts in a planar cell polarity (PCP) complex; polarization along the apical/basal axis of epithelial cells. Correct expression of the alternative isoforms is required for PCP signaling in imaginal disks. PCP signaling in the wing disk requires the receptor fz and the cytoplasmic proteins dsh and pk. These act in a feedback loop leading to activation of the jnk cascade and subsequent polarized arrangement of hairs and bristles. Dgo and pk compete with one another for dsh binding, thereby modulating fz dsh activity and ensuring tight control over fz PCP signaling. Vang, stan and pk function together to regulate the establishment of tissue polarity in the adult eye. The polypeptide is Protein prickle (Drosophila melanogaster (Fruit fly)).